The sequence spans 255 residues: Pimeloyl-[acyl-carrier protein] methyl ester esterase (255 aa).

Positions 16 to 242 (LVLLHGWGMN…SSHAPFITEP (227 aa)) constitute an AB hydrolase-1 domain. Residues Trp-22, 82–83 (SL), and 143–147 (FMALQ) contribute to the substrate site. The active-site Nucleophile is Ser-82. Residues Asp-207 and His-235 contribute to the active site. Position 235 (His-235) interacts with substrate.

Belongs to the AB hydrolase superfamily. Carboxylesterase BioH family. Monomer.

Its subcellular location is the cytoplasm. The enzyme catalyses 6-carboxyhexanoyl-[ACP] methyl ester + H2O = 6-carboxyhexanoyl-[ACP] + methanol + H(+). The protein operates within cofactor biosynthesis; biotin biosynthesis. In terms of biological role, the physiological role of BioH is to remove the methyl group introduced by BioC when the pimeloyl moiety is complete. It allows to synthesize pimeloyl-ACP via the fatty acid synthetic pathway through the hydrolysis of the ester bonds of pimeloyl-ACP esters. The sequence is that of Pimeloyl-[acyl-carrier protein] methyl ester esterase from Vibrio vulnificus (strain YJ016).